A 492-amino-acid chain; its full sequence is MATIHPPAYLLDQAKRRFTPSFNNFPGMSLVEHMLLNTKFPEKKLAEPPPGSGLKPVVGDAGLPILGHMIEMLRGGPDYLMFLYKTKGPVVFGDSAVLPGVAALGPDAAQVIYSNRNKDYSQQGWVPVIGPFFHRGLMLLDFEEHMFHRRIMQEAFVRSRLAGYLEQMDRVVSRVVADDWVVNDARFLVYPAMKALTLDIASMVFMGHEPGTDHELVTKVNKAFTITTRAGNAVIRTSVPPFTWWRGLRARELLENYFTARVKERREASGNDLLTVLCQTEDDDGNRFSDADIVNHMIFLMMAAHDTSTSTATTMAYQLAAHPEWQQRCRDESDRHGDGPLDIESLEQLESLDLVMNESIRLVTPVQWAMRQTVRDTELLGYYLPKGTNVIAYPGMNHRLPEIWTDPLTFDPERFTEPRNEHKRHRYAFTPFGGGVHKCIGMVFDQLEIKTILHRLLRRYRLELSRPDYQPRWDYSAMPIPMDGMPIVLRPR.

Position 439 (Cys-439) interacts with heme.

The protein belongs to the cytochrome P450 family. Heme serves as cofactor.

The chain is Putative cytochrome P450 136 (cyp136) from Mycobacterium tuberculosis (strain CDC 1551 / Oshkosh).